A 236-amino-acid chain; its full sequence is GCN5-related N-acetyltransferase 8 (236 aa).

In terms of domain architecture, N-acetyltransferase spans 96–235; it reads ATITSSPSPD…DALEAFDQVN (140 aa). Residues 161 to 163, 169 to 174, 200 to 202, and tyrosine 207 each bind acetyl-CoA; these read IFV, RKGFGS, and NVN. The Proton donor role is filled by tyrosine 207.

The protein belongs to the acetyltransferase family. GNAT subfamily. As to quaternary structure, oligomer. In terms of tissue distribution, expressed throughout the plant.

Its subcellular location is the cytoplasm. It is found in the nucleus. It catalyses the reaction an N-terminal L-alpha-aminoacyl-[protein] + acetyl-CoA = N-terminal N(alpha)-acetyl-L-alpha-aminoacyl-[protein] + CoA + H(+). The enzyme catalyses L-lysyl-[protein] + acetyl-CoA = N(6)-acetyl-L-lysyl-[protein] + CoA + H(+). Probable protein acetyltransferase with dual specificity triggering both N-alpha-acetylation (NTA) and epsilon-lysine acetylation (KA). The protein is GCN5-related N-acetyltransferase 8 of Arabidopsis thaliana (Mouse-ear cress).